The sequence spans 491 residues: MISGVLVYSSRGELVLNKFFKNSLKRSISDIFRVQVINNLDVRSPVLTLGSTTFHHIRSRHGDNLWLVTITRSNANSAAIWEFLYKLDAVMNAYRLDREEALKEEFMIVHEMLDIMLGGNGIPIDTELNSVIAQMSVKPVRNMGGLLDSPDGNDVLSSSSSPTSSAGELHFPKFLTKRSSSFLGQGDSTSDFYDNNKITWRPKGIIHKKDEVFLYVNERINILVSRDGSILKSYVDGTIDITTHLSGTPICRFGLNDSLGMQSEDEKKWLAQQQRHSGSDFGNKNFIPKAAAGSVLLEDCKFHECVSLDKFNRNHIIEFVPPDGSMELMKYHVRDNINLPFKVTPIVTHSTRDNEIDYRITLKSLFPGKLSAKDVVLHIPVPPSTVDCKISVSNGHCKFVPEENAMIWRFNKYNGLTENTLSAVTVSTSDTTQLNLQQWTRPPISLEFEVMMFSNSGLVVRYFTISGKDSKHRAVKWIKYISKAGSYEVRY.

Residues Ser-179, Ser-180, and Ser-181 each carry the phosphoserine modification. The MHD domain occupies 209–490; sequence KDEVFLYVNE…ISKAGSYEVR (282 aa).

The protein belongs to the adaptor complexes medium subunit family. Adaptor protein complex 2 (AP-2) is a heterotetramer composed of two large adaptins (alpha-type subunit APL3 and beta-type subunit APL1), a medium chain (mu-type subunit APM4) and a small adaptin (sigma-type subunit APS2).

The protein resides in the membrane. It is found in the clathrin-coated pit. The protein localises to the cytoplasmic vesicle. It localises to the clathrin-coated vesicle membrane. Its function is as follows. Component of the adaptor complexes which link clathrin to receptors in coated vesicles. Clathrin-associated protein complexes are believed to interact with the cytoplasmic tails of membrane proteins, leading to their selection and concentration. The sequence is that of AP-2 complex subunit mu (APM4) from Saccharomyces cerevisiae (strain ATCC 204508 / S288c) (Baker's yeast).